The primary structure comprises 433 residues: Protein slt1 (433 aa).

Disordered regions lie at residues 159 to 184, 200 to 234, and 252 to 433; these read SPEESSESQAEVADQQTGPYSTSEYA, NAPEQQSGPDVAELNTLPNRSKTSSQASVSDEELS, and SNKR…DEDA. Composition is skewed to polar residues over residues 172-184 and 215-228; these read DQQTGPYSTSEYA and TLPNRSKTSSQASV. 3 positions are modified to phosphoserine: Ser-227, Ser-229, and Ser-269. Basic and acidic residues predominate over residues 343–353; that stretch reads IDTKAGEKLTD. Polar residues predominate over residues 385–421; it reads EGSNNHEQGSFNEPKSNVDSNDSASPKRPSSQASLRH. Residues Ser-409, Ser-415, and Ser-418 each carry the phosphoserine modification.

The sequence is that of Protein slt1 (slt1) from Schizosaccharomyces pombe (strain 972 / ATCC 24843) (Fission yeast).